The following is a 367-amino-acid chain: uncharacterized protein (367 aa).

One can recognise an FAD-binding PCMH-type domain in the interval 1–96 (ITLHRLAELV…LTATLQLQPV (96 aa)).

To M.tuberculosis Rv3790.

This is an uncharacterized protein from Streptomyces coelicolor.